A 275-amino-acid polypeptide reads, in one-letter code: Glutamate racemase (275 aa).

Substrate-binding positions include 12–13 (DS) and 44–45 (YG). Catalysis depends on Cys-75, which acts as the Proton donor/acceptor. 76–77 (NT) contributes to the substrate binding site. Cys-185 acts as the Proton donor/acceptor in catalysis. Residue 186–187 (TH) coordinates substrate.

This sequence belongs to the aspartate/glutamate racemases family.

The enzyme catalyses L-glutamate = D-glutamate. Its pathway is cell wall biogenesis; peptidoglycan biosynthesis. Functionally, provides the (R)-glutamate required for cell wall biosynthesis. This chain is Glutamate racemase, found in Mycobacterium avium (strain 104).